Consider the following 523-residue polypeptide: WD repeat-containing protein YPL247C (523 aa).

A disordered region spans residues 1–64; it reads MDPFHNGNKR…TTNGGNSKRN (64 aa). Polar residues predominate over residues 9–40; it reads KRSSISFGSSQRQPYNKNNYLSGTNGPSSAAQ. Residue serine 47 is modified to Phosphoserine. Residues 52–64 show a composition bias toward low complexity; it reads SGNTTNGGNSKRN. Serine 65 carries the post-translational modification Phosphoserine. WD repeat units follow at residues 173–213, 241–281, 285–325, and 392–432; these read DVVY…RQFQ, GTFP…YVKT, AHDS…HSTI, and GHGS…MEIN. The segment at 436 to 472 is disordered; it reads SKSPSIHGTSLEDPDGDTEMTDGGAGSGLNEDPLSLN.

This sequence belongs to the WD repeat WDR68 family.

The protein localises to the cytoplasm. It is found in the nucleus. This Saccharomyces cerevisiae (strain ATCC 204508 / S288c) (Baker's yeast) protein is WD repeat-containing protein YPL247C.